The chain runs to 45 residues: uncharacterized protein (45 aa).

This is an uncharacterized protein from Dictyostelium discoideum (Social amoeba).